Reading from the N-terminus, the 245-residue chain is Large ribosomal subunit protein uL3 (245 aa).

Position 151 is an N5-methylglutamine (glutamine 151). A disordered region spans residues 214-245 (KDAPQPGKYRLANSAAPQPAEADAASDTGAQA). The segment covering 225 to 245 (ANSAAPQPAEADAASDTGAQA) has biased composition (low complexity).

It belongs to the universal ribosomal protein uL3 family. In terms of assembly, part of the 50S ribosomal subunit. Forms a cluster with proteins L14 and L19. Post-translationally, methylated by PrmB.

In terms of biological role, one of the primary rRNA binding proteins, it binds directly near the 3'-end of the 23S rRNA, where it nucleates assembly of the 50S subunit. The protein is Large ribosomal subunit protein uL3 of Methylocella silvestris (strain DSM 15510 / CIP 108128 / LMG 27833 / NCIMB 13906 / BL2).